Reading from the N-terminus, the 440-residue chain is General transcription factor IIE subunit 1 (440 aa).

Residue A2 is modified to N-acetylalanine. Positions 14-104 (LKRLAKYVIR…NYRTLVNVVK (91 aa)) constitute an HTH TFE/IIEalpha-type domain. Position 67 is an N6-acetyllysine (K67). The Zn(2+) site is built by C129, C132, C154, and C157. The segment at 129–157 (CPVCCSTFTDLEANQLFDPMTGTFRCTFC) adopts a C4-type zinc-finger fold. Phosphoserine is present on S268. Low complexity predominate over residues 333-353 (SSVTAGSVGAAAPVTAANGSD). The segment at 333–395 (SSVTAGSVGA…EEFEEVADDP (63 aa)) is disordered. Acidic residues-rich tracts occupy residues 354–364 (SESETSESDDD) and 381–393 (EDEE…EVAD).

Belongs to the TFIIE alpha subunit family. In terms of assembly, tetramer of two alpha and two beta chains. Interacts with TAF6/TAFII80. Interacts with ATF7IP. Interacts with SND1. Part of TBP-based Pol II pre-initiation complex (PIC), in which Pol II core assembles with general transcription factors and other specific initiation factors including GTF2E1, GTF2E2, GTF2F1, GTF2F2, TCEA1, ERCC2, ERCC3, GTF2H2, GTF2H3, GTF2H4, GTF2H5, GTF2A1, GTF2A2, GTF2B and TBP; this large multi-subunit PIC complex mediates DNA unwinding and targets Pol II core to the transcription start site where the first phosphodiester bond forms.

It is found in the nucleus. In terms of biological role, recruits TFIIH to the initiation complex and stimulates the RNA polymerase II C-terminal domain kinase and DNA-dependent ATPase activities of TFIIH. Both TFIIH and TFIIE are required for promoter clearance by RNA polymerase. The polypeptide is General transcription factor IIE subunit 1 (Gtf2e1) (Mus musculus (Mouse)).